Consider the following 429-residue polypeptide: Xyloglucan O-acetyltransferase 1 (429 aa).

Topologically, residues Met1 to Lys20 are cytoplasmic. Residues Leu21 to Pro41 traverse the membrane as a helical; Signal-anchor for type II membrane protein segment. Residues Tyr42–Glu429 are Lumenal-facing. Residues Asn46 and Asn89 are each glycosylated (N-linked (GlcNAc...) asparagine). 4 cysteine pairs are disulfide-bonded: Cys72-Cys122, Cys93-Cys158, Cys102-Cys402, and Cys317-Cys398. The short motif at Gly145–Ser147 is the GDS motif element. Ser147 serves as the catalytic Nucleophile. N-linked (GlcNAc...) asparagine glycosylation is found at Asn189, Asn263, and Asn351. The active-site Proton donor is Asp397. Positions Asp397 to His400 match the DXXH motif motif. Catalysis depends on His400, which acts as the Proton acceptor.

Belongs to the PC-esterase family. TBL subfamily.

The protein resides in the golgi apparatus membrane. Its function is as follows. Xyloglucan acetyltransferase that catalyzes the acetylation of fucosylated Gal residues on xyloglucan side chains. Predominantly catalyze 6-O-monoacetylation of Gal residues in the Fuc-Gal-Xyl trisaccharide side chains of xyloglucan oligomers. The protein is Xyloglucan O-acetyltransferase 1 of Populus trichocarpa (Western balsam poplar).